The primary structure comprises 738 residues: Flowering time control protein FCA (738 aa).

Residues 1–118 form a disordered region; the sequence is MHRGGDRSTD…RGDHSDHDNR (118 aa). Composition is skewed to gly residues over residues 52-70 and 81-98; these read RGGG…GGGR and SGGG…GEPG. Residues 109–118 show a composition bias toward basic and acidic residues; it reads RGDHSDHDNR. 2 RRM domains span residues 122 to 203 and 213 to 293; these read VKLF…YADG and HKLF…FADP. Disordered regions lie at residues 292–414 and 566–594; these read DPKR…GHHL and QQSN…AIIP. A compositionally biased stretch (gly residues) spans 301-311; sequence SRGGPAFGGPG. Positions 342-358 are enriched in polar residues; it reads HPSSPRSAPHQFNNFGS. Low complexity predominate over residues 368-377; the sequence is TVTSTTDTAT. Composition is skewed to polar residues over residues 383–401 and 575–594; these read FSGN…SSHM and PTQG…AIIP. The WW domain occupies 609–642; it reads VPLTCNWTEHTSPEGFKYYYNSITRESKWDKPEE. The segment at 670-738 is disordered; the sequence is MQQLQSPPQA…QSAQERAWKS (69 aa). The span at 683 to 706 shows a compositional bias: low complexity; that stretch reads PAMQPVQQIPQAQQGQQQMQMKQQ. Residues 723 to 732 show a composition bias toward polar residues; sequence RIQQGIQSAQ.

Interacts with FY. Binds to SF1, FIK, RPRD1B, Os09g0509000/LOC_Os09g33480 and MADS8. In terms of tissue distribution, mostly expressed in young flowers (panicles) and stems, and also present in young seedlings leaves and roots.

Its subcellular location is the nucleus. Its function is as follows. Plays a major role in the promotion of the transition of the vegetative meristem to reproductive development. Required for RNA-mediated chromatin silencing of a range of loci in the genome. Cotranscriptionally recognizes aberrant RNA and marks it for silencing. Controls alternative cleavage and polyadenylation on pre-mRNAs and antisense RNAs. Regulates flowering time, seed size and cell volume, probably via the modulation of cell size. This chain is Flowering time control protein FCA, found in Oryza sativa subsp. japonica (Rice).